Reading from the N-terminus, the 119-residue chain is Large ribosomal subunit protein uL18 (119 aa).

This sequence belongs to the universal ribosomal protein uL18 family. As to quaternary structure, part of the 50S ribosomal subunit; part of the 5S rRNA/L5/L18/L25 subcomplex. Contacts the 5S and 23S rRNAs.

In terms of biological role, this is one of the proteins that bind and probably mediate the attachment of the 5S RNA into the large ribosomal subunit, where it forms part of the central protuberance. This is Large ribosomal subunit protein uL18 from Borrelia hermsii (strain HS1 / DAH).